The chain runs to 284 residues: Tropomyosin (284 aa).

A coiled-coil region spans residues 1 to 284 (MDAIKKKMVA…DATFAELAGY (284 aa)). Residues 32–41 (TEEAKAKIED) are compositionally biased toward basic and acidic residues. Positions 32-60 (TEEAKAKIEDDYNSLQKKSIQTENDLDNT) are disordered. Residues 44-60 (NSLQKKSIQTENDLDNT) show a composition bias toward polar residues.

This sequence belongs to the tropomyosin family. In terms of assembly, homodimer.

Its function is as follows. Tropomyosin, in association with the troponin complex, plays a central role in the calcium dependent regulation of muscle contraction. The protein is Tropomyosin of Mytilus edulis (Blue mussel).